Consider the following 394-residue polypeptide: Elongation factor Tu (394 aa).

Residues 10-204 (KPHLNVGTIG…ALDTYIPLPE (195 aa)) form the tr-type G domain. The segment at 19 to 26 (GHVDHGKT) is G1. 19 to 26 (GHVDHGKT) is a binding site for GTP. Position 26 (Thr-26) interacts with Mg(2+). Positions 60 to 64 (GITIN) are G2. Positions 81–84 (DCPG) are G3. GTP is bound by residues 81 to 85 (DCPGH) and 136 to 139 (NKCD). A G4 region spans residues 136 to 139 (NKCD). A G5 region spans residues 174–176 (SAL).

The protein belongs to the TRAFAC class translation factor GTPase superfamily. Classic translation factor GTPase family. EF-Tu/EF-1A subfamily. Monomer.

It localises to the cytoplasm. The enzyme catalyses GTP + H2O = GDP + phosphate + H(+). In terms of biological role, GTP hydrolase that promotes the GTP-dependent binding of aminoacyl-tRNA to the A-site of ribosomes during protein biosynthesis. The chain is Elongation factor Tu from Psychromonas ingrahamii (strain DSM 17664 / CCUG 51855 / 37).